Here is a 120-residue protein sequence, read N- to C-terminus: NADH dehydrogenase [ubiquinone] 1 subunit C2 (120 aa).

Residues 57–76 (GLHRQLLFVTSFVFAGYFYL) traverse the membrane as a helical segment.

Belongs to the complex I NDUFC2 subunit family. As to quaternary structure, complex I is composed of 45 different subunits. Interacts with TMEM242.

The protein localises to the mitochondrion inner membrane. Functionally, accessory subunit of the mitochondrial membrane respiratory chain NADH dehydrogenase (Complex I), that is believed not to be involved in catalysis but required for the complex assembly. Complex I functions in the transfer of electrons from NADH to the respiratory chain. The immediate electron acceptor for the enzyme is believed to be ubiquinone. This is NADH dehydrogenase [ubiquinone] 1 subunit C2 from Mus musculus (Mouse).